A 43-amino-acid chain; its full sequence is Potassium channel toxin gamma-KTx 4.5 (43 aa).

Intrachain disulfides connect C5/C23, C11/C34, C20/C39, and C24/C41.

It belongs to the ergtoxin family. Gamma-KTx 4 subfamily. Expressed by the venom gland.

The protein resides in the secreted. Reversibly blocks Kv11/ERG potassium channels. The protein is Potassium channel toxin gamma-KTx 4.5 of Centruroides exilicauda (Bark scorpion).